A 394-amino-acid chain; its full sequence is NAD(P)H-quinone oxidoreductase subunit H (394 aa).

Belongs to the complex I 49 kDa subunit family. In terms of assembly, NDH-1 can be composed of about 15 different subunits; different subcomplexes with different compositions have been identified which probably have different functions.

It is found in the cellular thylakoid membrane. It carries out the reaction a plastoquinone + NADH + (n+1) H(+)(in) = a plastoquinol + NAD(+) + n H(+)(out). The catalysed reaction is a plastoquinone + NADPH + (n+1) H(+)(in) = a plastoquinol + NADP(+) + n H(+)(out). NDH-1 shuttles electrons from an unknown electron donor, via FMN and iron-sulfur (Fe-S) centers, to quinones in the respiratory and/or the photosynthetic chain. The immediate electron acceptor for the enzyme in this species is believed to be plastoquinone. Couples the redox reaction to proton translocation, and thus conserves the redox energy in a proton gradient. Cyanobacterial NDH-1 also plays a role in inorganic carbon-concentration. The chain is NAD(P)H-quinone oxidoreductase subunit H from Synechococcus sp. (strain ATCC 27144 / PCC 6301 / SAUG 1402/1) (Anacystis nidulans).